We begin with the raw amino-acid sequence, 858 residues long: Neural cell adhesion molecule 1 (858 aa).

The N-terminal stretch at Met1 to Ser19 is a signal peptide. 5 consecutive Ig-like C2-type domains span residues Leu20–Asn111, Gln116–Gln205, Pro212–His302, Pro309–Gln414, and Pro417–Glu502. Topologically, residues Leu20 to Thr721 are extracellular. 2 cysteine pairs are disulfide-bonded: Cys41–Cys96 and Cys139–Cys189. Heparin-binding positions include Lys152–Arg156 and Lys161–Arg165. The N-linked (GlcNAc...) asparagine glycan is linked to Asn222. Cys235 and Cys288 form a disulfide bridge. Residues Asn316, Asn348, Asn434, Asn460, and Asn489 are each glycosylated (N-linked (GlcNAc...) asparagine). Cysteines 330 and 396 form a disulfide. Cys437 and Cys490 are joined by a disulfide. 2 Fibronectin type-III domains span residues Thr510–Val609 and Glu611–Pro706. The helical transmembrane segment at Gly722 to Met739 threads the bilayer. Over Asp740–Ala858 the chain is Cytoplasmic. Residues Pro765–Ala858 form a disordered region. Composition is skewed to basic and acidic residues over residues Lys768–Pro809 and Glu817–Ala834. Phosphoserine occurs at positions 780 and 784.

In terms of assembly, interacts with MDK. Found in a complex with SLC39A6, SLC39A10 and with NCAM1; this complex controls NCAM1 phosphorylation and integration into focal adhesion complexes during epithelial-tomesenchymal transition. Interacts with synaptic plasticity regulator PANTS. In terms of processing, polysialylated by ST8SIA2 and ST8SIA4. Polysialylation modulates cell interactions by confering both attractive and repulsive properties that are highly regulated by ST8SIA2 and ST8SIA4. Polysialylation is formed on a-2,3-linked sialic acid of core glycans.

Its subcellular location is the cell membrane. Functionally, this protein is a cell adhesion molecule involved in neuron-neuron adhesion, neurite fasciculation, outgrowth of neurites, etc. This chain is Neural cell adhesion molecule 1, found in Rattus norvegicus (Rat).